The chain runs to 336 residues: Homoserine O-acetyltransferase (336 aa).

The AB hydrolase-1 domain occupies 58–321 (AILVLHALTG…PHGHDAFLID (264 aa)). The active-site Nucleophile is the Ser147. Arg204 lines the substrate pocket. Catalysis depends on residues Asp286 and His315. Residue Asp316 participates in substrate binding.

This sequence belongs to the AB hydrolase superfamily. MetX family. As to quaternary structure, homodimer.

Its subcellular location is the cytoplasm. The enzyme catalyses L-homoserine + acetyl-CoA = O-acetyl-L-homoserine + CoA. It participates in amino-acid biosynthesis; L-methionine biosynthesis via de novo pathway; O-acetyl-L-homoserine from L-homoserine: step 1/1. Functionally, transfers an acetyl group from acetyl-CoA to L-homoserine, forming acetyl-L-homoserine. The protein is Homoserine O-acetyltransferase of Deinococcus geothermalis (strain DSM 11300 / CIP 105573 / AG-3a).